Consider the following 45-residue polypeptide: Large ribosomal subunit protein bL34 (45 aa).

The protein belongs to the bacterial ribosomal protein bL34 family.

In Beutenbergia cavernae (strain ATCC BAA-8 / DSM 12333 / CCUG 43141 / JCM 11478 / NBRC 16432 / NCIMB 13614 / HKI 0122), this protein is Large ribosomal subunit protein bL34.